Here is a 273-residue protein sequence, read N- to C-terminus: MRQVAIYGKGGIGKSTTTQNLTAGLAERGNKIMVVGCDPKADSTRLLLGGLAQKSVLDTLREEGEDVELDSILKEGFGGIRCVESGGPEPGVGCAGRGIITSINMLEQLGAYTDDLDYVFYDVLGDVVCGGFAMPIREGKAQEIYIVASGEMMALYAANNISKGIQKYAKSGGVRLGGIICNSRKVANEYELLDAFAKELGSQLIHFVPRSPMVTKAEINKKTVIDFDPKSEQADEYRELARKIDENELFVIPKPMTQERLEEILVQYGLNDL.

8-15 (GKGGIGKS) lines the ATP pocket. Cysteine 94 provides a ligand contact to [4Fe-4S] cluster. Residue arginine 97 is modified to ADP-ribosylarginine; by dinitrogenase reductase ADP-ribosyltransferase. Position 129 (cysteine 129) interacts with [4Fe-4S] cluster.

It belongs to the NifH/BchL/ChlL family. Homodimer. It depends on [4Fe-4S] cluster as a cofactor. The reversible ADP-ribosylation of Arg-97 inactivates the nitrogenase reductase and regulates nitrogenase activity.

The enzyme catalyses N2 + 8 reduced [2Fe-2S]-[ferredoxin] + 16 ATP + 16 H2O = H2 + 8 oxidized [2Fe-2S]-[ferredoxin] + 2 NH4(+) + 16 ADP + 16 phosphate + 6 H(+). Functionally, the key enzymatic reactions in nitrogen fixation are catalyzed by the nitrogenase complex, which has 2 components: the iron protein and the molybdenum-iron protein. The chain is Nitrogenase iron protein 4 (nifH4) from Clostridium pasteurianum.